Consider the following 434-residue polypeptide: DNA primase DnaG (434 aa).

A Toprim domain is found at 171–250; sequence DAIIIVEGRA…AFSPRRRSVE (80 aa). 3 residues coordinate Mg(2+): Glu177, Asp219, and Asp221. The interval 290–319 is disordered; it reads GEEEHSSVSQKEEGNNTTPDVPADLPEEPP. A compositionally biased stretch (basic and acidic residues) spans 292-303; the sequence is EEHSSVSQKEEG.

The protein belongs to the archaeal DnaG primase family. As to quaternary structure, forms a ternary complex with MCM helicase and DNA. The cofactor is Mg(2+).

The catalysed reaction is ssDNA + n NTP = ssDNA/pppN(pN)n-1 hybrid + (n-1) diphosphate.. Functionally, RNA polymerase that catalyzes the synthesis of short RNA molecules used as primers for DNA polymerase during DNA replication. The polypeptide is DNA primase DnaG (Methanocorpusculum labreanum (strain ATCC 43576 / DSM 4855 / Z)).